The following is a 79-amino-acid chain: Conotoxin TxMEKL-021 (79 aa).

Residues 1–19 (MEKLTILLLVAVVLMSTQA) form the signal peptide. A propeptide spanning residues 20–47 (LPQGGGEKRPRENIRFLSKRKSNAERWR) is cleaved from the precursor. 3 disulfide bridges follow: Cys-51–Cys-65, Cys-58–Cys-69, and Cys-64–Cys-75.

The protein belongs to the conotoxin O2 superfamily. As to expression, expressed by the venom duct.

It localises to the secreted. The polypeptide is Conotoxin TxMEKL-021 (Conus textile (Cloth-of-gold cone)).